A 317-amino-acid chain; its full sequence is Transaldolase (317 aa).

The active-site Schiff-base intermediate with substrate is the Lys126.

It belongs to the transaldolase family. Type 1 subfamily. Homodimer.

The protein localises to the cytoplasm. The catalysed reaction is D-sedoheptulose 7-phosphate + D-glyceraldehyde 3-phosphate = D-erythrose 4-phosphate + beta-D-fructose 6-phosphate. It participates in carbohydrate degradation; pentose phosphate pathway; D-glyceraldehyde 3-phosphate and beta-D-fructose 6-phosphate from D-ribose 5-phosphate and D-xylulose 5-phosphate (non-oxidative stage): step 2/3. Transaldolase is important for the balance of metabolites in the pentose-phosphate pathway. The sequence is that of Transaldolase from Burkholderia orbicola (strain MC0-3).